The chain runs to 486 residues: ATP synthase subunit beta (486 aa).

Residue 164-171 (GGAGVGKT) coordinates ATP.

The protein belongs to the ATPase alpha/beta chains family. F-type ATPases have 2 components, CF(1) - the catalytic core - and CF(0) - the membrane proton channel. CF(1) has five subunits: alpha(3), beta(3), gamma(1), delta(1), epsilon(1). CF(0) has four main subunits: a(1), b(1), b'(1) and c(9-12).

It localises to the cellular thylakoid membrane. It carries out the reaction ATP + H2O + 4 H(+)(in) = ADP + phosphate + 5 H(+)(out). Functionally, produces ATP from ADP in the presence of a proton gradient across the membrane. The catalytic sites are hosted primarily by the beta subunits. This Prochlorococcus marinus (strain AS9601) protein is ATP synthase subunit beta.